The chain runs to 109 residues: Probable WRKY transcription factor 43 (109 aa).

The WRKY DNA-binding region spans 24–89 (SDADILDDGY…YEGIHNHPCE (66 aa)).

It belongs to the WRKY group II-c family.

The protein localises to the nucleus. In terms of biological role, transcription factor. Interacts specifically with the W box (5'-(T)TGAC[CT]-3'), a frequently occurring elicitor-responsive cis-acting element. The polypeptide is Probable WRKY transcription factor 43 (WRKY43) (Arabidopsis thaliana (Mouse-ear cress)).